The following is a 177-amino-acid chain: Large ribosomal subunit protein uL6 (177 aa).

It belongs to the universal ribosomal protein uL6 family. Part of the 50S ribosomal subunit.

This protein binds to the 23S rRNA, and is important in its secondary structure. It is located near the subunit interface in the base of the L7/L12 stalk, and near the tRNA binding site of the peptidyltransferase center. The polypeptide is Large ribosomal subunit protein uL6 (Delftia acidovorans (strain DSM 14801 / SPH-1)).